Reading from the N-terminus, the 189-residue chain is Protein C1orf43 homolog (189 aa).

The helical transmembrane segment at 11–31 (VNVVLVMAYGSLVFVLLFIFV) threads the bilayer.

The protein localises to the membrane. Its subcellular location is the golgi apparatus. It localises to the mitochondrion. In terms of biological role, general regulator of phagocytosis. Required to uptake Gram negative bacterium by macrophages. In Pongo abelii (Sumatran orangutan), this protein is Protein C1orf43 homolog.